The following is a 1080-amino-acid chain: DNA-directed RNA polymerase subunit beta (1080 aa).

This sequence belongs to the RNA polymerase beta chain family. In plastids the minimal PEP RNA polymerase catalytic core is composed of four subunits: alpha, beta, beta', and beta''. When a (nuclear-encoded) sigma factor is associated with the core the holoenzyme is formed, which can initiate transcription.

It is found in the plastid. It localises to the chloroplast. It carries out the reaction RNA(n) + a ribonucleoside 5'-triphosphate = RNA(n+1) + diphosphate. DNA-dependent RNA polymerase catalyzes the transcription of DNA into RNA using the four ribonucleoside triphosphates as substrates. In Mesostigma viride (Green alga), this protein is DNA-directed RNA polymerase subunit beta.